Here is a 120-residue protein sequence, read N- to C-terminus: Large ribosomal subunit protein uL18 (120 aa).

This sequence belongs to the universal ribosomal protein uL18 family. Part of the 50S ribosomal subunit; part of the 5S rRNA/L5/L18/L25 subcomplex. Contacts the 5S and 23S rRNAs.

This is one of the proteins that bind and probably mediate the attachment of the 5S RNA into the large ribosomal subunit, where it forms part of the central protuberance. The sequence is that of Large ribosomal subunit protein uL18 from Rhodopseudomonas palustris (strain HaA2).